The sequence spans 3726 residues: Histone-lysine N-methyltransferase trithorax (3726 aa).

4 disordered regions span residues M1–S247, Q321–G352, N371–Q429, and A509–R624. Composition is skewed to low complexity over residues P31–A53 and G71–S101. Over residues G102–N115 the composition is skewed to gly residues. Positions L126–R143 are enriched in basic and acidic residues. The span at S147–G205 shows a compositional bias: low complexity. Over residues K206–S215 the composition is skewed to polar residues. Over residues T222–S247 the composition is skewed to low complexity. 2 stretches are compositionally biased toward low complexity: residues A384 to A402 and A509 to N525. Residues P553–A586 are compositionally biased toward acidic residues. Residues V587–L610 are compositionally biased toward basic and acidic residues. The segment at residues P759–R884 is a DNA-binding region (nuclear receptor). 4 disordered regions span residues T915–L937, L981–V1049, V1115–K1184, and D1208–R1231. Residues K918 to L937 are compositionally biased toward polar residues. Positions S986–E1000 are enriched in basic and acidic residues. Residues P1031 to A1041 are compositionally biased toward low complexity. Basic and acidic residues predominate over residues S1123–T1132. 2 stretches are compositionally biased toward low complexity: residues G1173–A1183 and T1211–Q1223. PHD-type zinc fingers lie at residues R1266–C1347, Y1348–C1393, and G1421–R1482. The region spanning A1496–E1663 is the Bromo domain. The tract at residues F1573 to V1592 is disordered. The C2HC pre-PHD-type zinc-finger motif lies at T1734–V1774. The segment at I1795–A1842 adopts a PHD-type 4 zinc-finger fold. Residues R1884 to Q1941 form the FYR N-terminal domain. Disordered regions lie at residues G1991–Q2019, T2068–S2110, C2283–T2302, G2649–T2669, S2866–K2894, Q3029–P3096, and R3347–P3381. Over residues N2074 to N2087 the composition is skewed to low complexity. Low complexity predominate over residues S3032 to S3043. Polar residues predominate over residues L3044–P3057. The 85-residue stretch at G3386–Y3470 folds into the FYR C-terminal domain. The 117-residue stretch at D3588–K3704 folds into the SET domain. Positions 3598 and 3600 each coordinate S-adenosyl-L-methionine. Position 3641 is an S-methylcysteine; by autocatalysis (C3641). S-adenosyl-L-methionine contacts are provided by residues Y3642 and N3665 to H3666. C3668, C3714, C3716, and C3721 together coordinate Zn(2+). The region spanning E3710–N3726 is the Post-SET domain.

This sequence belongs to the class V-like SAM-binding methyltransferase superfamily. Histone-lysine methyltransferase family. TRX/MLL subfamily. In terms of assembly, interacts (via SET domain) with ash1 (via SET domain). Interacts with Nup98. Maternal isoforms are expressed in syncytial blastoderm, confined to the ventral region fated to become mesoderm. An additional broad domain of expression arises during cellularization and is quickly resolved into four pair-rule-like stripes in the posterior half of the embryo.

Its subcellular location is the nucleus. It localises to the chromosome. The catalysed reaction is L-lysyl(9)-[histone H3] + 3 S-adenosyl-L-methionine = N(6),N(6),N(6)-trimethyl-L-lysyl(9)-[histone H3] + 3 S-adenosyl-L-homocysteine + 3 H(+). It carries out the reaction L-cysteinyl-[protein] + S-adenosyl-L-methionine = S-methyl-L-cysteinyl-[protein] + S-adenosyl-L-homocysteine + H(+). Its function is as follows. Histone methyltransferase that methylates 'Lys-4' of histone H3 (H3K4me). H3K4me represents a specific tag for epigenetic transcriptional activation. Functions in segment determination through interaction with genes of bithorax (BX-C) and antennapedia (ANT-C) complexes. Acts as an activator of BX-C. Involved in the very early regulation of homeotic genes expressed only in the posterior region of the embryo. Also has auto-methylation activity on Cys-3641. The sequence is that of Histone-lysine N-methyltransferase trithorax from Drosophila melanogaster (Fruit fly).